Consider the following 299-residue polypeptide: Glycine--tRNA ligase alpha subunit (299 aa).

It belongs to the class-II aminoacyl-tRNA synthetase family. As to quaternary structure, tetramer of two alpha and two beta subunits.

The protein localises to the cytoplasm. The catalysed reaction is tRNA(Gly) + glycine + ATP = glycyl-tRNA(Gly) + AMP + diphosphate. The chain is Glycine--tRNA ligase alpha subunit from Dictyoglomus thermophilum (strain ATCC 35947 / DSM 3960 / H-6-12).